The chain runs to 1150 residues: RNA polymerase-associated protein CTR9 (1150 aa).

TPR repeat units lie at residues 143-176 (VRAWFYLFERDKSTNKYELADQQFNYVVKTNPKN), 177-210 (VLPLIGKAVIAFNKKDYKTAIYYFRKAIRQCRHT), 212-245 (ADLRVGIGHCFAKMGMMDKAKTAFERAMEIEPYN), 247-282 (SAMCGLGIILLNTYDHDSLKHAVSLFGRSYNLQTDH), 320-353 (AEAFYQMGRCRHAQGQFDGAYKYYYQARQANNGE), 355-388 (TLAHYGLGQMYIHRNEIEEAIKCFDTVHKRLPNN), 432-464 (YEACIDLAQLLEATDPKRSLELYENAIDLLVTN), 471-504 (PEMLNNVGALYMSMKQYEKAEHHFKRAKERLEEQ), 594-627 (PIVWTLIGNLHFAKNEWMPAQKKFEFILSKIFNN), 643-677 (FEQLLNPSRKKEDEKKYIDRALQMYQKALKLQPKN), 679-711 (YAANGIGCVLAYKRNWNDARDVFSQVRESTSEF), 712-745 (YDVWLNIAHVCMEREQWMAAVQMYSSAMKKFRKE), and 748-781 (STLQHYLAKAYYRANMLNEAKEALECAMLDQLDN). Coiled-coil stretches lie at residues 848-916 (AEEA…NLRL) and 972-1028 (ERRE…AKQS). The disordered stretch occupies residues 935–1150 (KRRGGGGRKR…KKKVIESDSD (216 aa)). Positions 975–992 (ERRKKDKAAKKASRKKRE) are enriched in basic residues. Composition is skewed to basic and acidic residues over residues 993–1005 (RRDSGGPDSNRRD), 1013–1024 (EERDRKLQEKLS), 1060–1084 (DPRPPVDEFDSPTRTDSDSDRETTT), and 1132–1150 (RDSDGSDAPKKKVIESDSD).

As to quaternary structure, component of the PAF1 complex which consists of at least cdc-73, ctr-9, leo-1, pafo-1 and rtfo-1.

It is found in the nucleus. Its function is as follows. Component of the PAF1 complex which is a multifunctional complex involved in transcription initiation via genetic interactions with TATA-binding proteins, elongation and transcription-coupled histone modification. Ctr-9 is required for epidermal microtubule organization during morphogenesis. The polypeptide is RNA polymerase-associated protein CTR9 (Caenorhabditis elegans).